A 706-amino-acid chain; its full sequence is ABC transporter D family member 2, chloroplastic (706 aa).

A chloroplast-targeting transit peptide spans 1-44 (MILMITAPVCPPHLLLRHSSLLRHESSIGNFHRKKNPRFRTVSC). An N-acetylserine modification is found at Ser-45. Transmembrane regions (helical) follow at residues 88-108 (LAAV…FNFL), 124-144 (FTKQ…FFVL), 200-222 (TALS…SNIL), 237-257 (SFGG…LNFL), and 326-346 (ILPV…FGVI). The region spanning 88–372 (LAAVFALTLA…VVYQFQAISS (285 aa)) is the ABC transmembrane type-1 domain. One can recognise an ABC transporter domain in the interval 430 to 697 (LEIEELTLQT…DAQDSLYGRL (268 aa)). Position 464 to 471 (464 to 471 (GPSGSGKT)) interacts with ATP. A disordered region spans residues 545 to 569 (TTPGGSNIDGSPPLLIREDGNEKPT). The segment covering 560-569 (IREDGNEKPT) has biased composition (basic and acidic residues).

This sequence belongs to the ABC transporter superfamily. ABCD family. Peroxisomal fatty acyl CoA transporter (TC 3.A.1.203) subfamily. Homodimer or heterodimer.

It localises to the membrane. It is found in the plastid. The protein localises to the chloroplast. This chain is ABC transporter D family member 2, chloroplastic (ABCC2), found in Arabidopsis thaliana (Mouse-ear cress).